The following is a 538-amino-acid chain: Mitochondrial distribution and morphology protein 34 (538 aa).

Residues 1–224 (MSFRFDRSVF…LPTALFNMSQ (224 aa)) form the SMP-LTD domain. 2 disordered regions span residues 26–55 (ALNP…RKSG) and 231–251 (DGSR…NQPS).

This sequence belongs to the MDM34 family. Component of the ER-mitochondria encounter structure (ERMES) or MDM complex, composed of MMM1, MDM10, MDM12 and MDM34.

The protein resides in the mitochondrion outer membrane. Component of the ERMES/MDM complex, which serves as a molecular tether to connect the endoplasmic reticulum (ER) and mitochondria. Components of this complex are involved in the control of mitochondrial shape and protein biogenesis, and function in nonvesicular lipid trafficking between the ER and mitochondria. MDM34 is required for the interaction of the ER-resident membrane protein MMM1 and the outer mitochondrial membrane-resident beta-barrel protein MDM10. The chain is Mitochondrial distribution and morphology protein 34 from Candida glabrata (strain ATCC 2001 / BCRC 20586 / JCM 3761 / NBRC 0622 / NRRL Y-65 / CBS 138) (Yeast).